The following is a 523-amino-acid chain: Melanoma-associated antigen E2 (523 aa).

MAGE domains lie at 88-288 and 311-502; these read LEDR…YNKA and MNDK…YREA.

The chain is Melanoma-associated antigen E2 (MAGEE2) from Homo sapiens (Human).